Reading from the N-terminus, the 787-residue chain is ER degradation-enhancing alpha-mannosidase-like protein 1 (787 aa).

Positions 1 to 22 (MGSLHSIFCVCLILLCIFKENS) are cleaved as a signal peptide. Residues Asn-479, Asn-609, Asn-670, Asn-693, and Asn-756 are each glycosylated (N-linked (GlcNAc...) asparagine).

Belongs to the glycosyl hydrolase 47 family.

It is found in the endoplasmic reticulum lumen. Alpha-mannosidase-like protein involved in endoplasmic reticulum-associated degradation (ERAD). Delivers misfolded glycoproteins to proteasomes. It lacks mannosidase activity. The polypeptide is ER degradation-enhancing alpha-mannosidase-like protein 1 (mnl1) (Schizosaccharomyces pombe (strain 972 / ATCC 24843) (Fission yeast)).